Reading from the N-terminus, the 325-residue chain is Mitochondrial citrate transporter C (325 aa).

Solcar repeat units follow at residues 15–105, 117–208, and 221–310; these read ASPA…YKQM, KATF…LKAF, and LPSY…LKGK. Helical transmembrane passes span 21-41, 82-102, 121-141, 187-207, 221-241, and 282-303; these read LIAG…LDTI, GAVL…YESY, LAGL…MEVV, TALR…ELKA, LPSY…PFSN, and FYKG…TFTV.

This sequence belongs to the mitochondrial carrier (TC 2.A.29) family.

It is found in the mitochondrion inner membrane. Mitochondrial transporter that does not mediate citrate export from mitochondria to cytoplasm. Its exact function has still to be determined. In Aspergillus niger (strain ATCC 1015 / CBS 113.46 / FGSC A1144 / LSHB Ac4 / NCTC 3858a / NRRL 328 / USDA 3528.7), this protein is Mitochondrial citrate transporter C.